The chain runs to 186 residues: Tumor necrosis factor alpha-induced protein 8-like protein 1 (186 aa).

The protein belongs to the TNFAIP8 family. In terms of assembly, interacts with FBXW5; TNFAIP8L1 competes with TSC2 to bind FBXW5 increasing TSC2 stability by preventing its ubiquitination. As to expression, detected in wide variety tissues, such as neurons in brain, hepatocytes, germ cells of female and male reproductive organs, muscular tissues and variety types of cells of the epithelial origin (at protein level).

The protein resides in the cytoplasm. Functionally, acts as a negative regulator of mTOR activity. The chain is Tumor necrosis factor alpha-induced protein 8-like protein 1 (Tnfaip8l1) from Mus musculus (Mouse).